A 500-amino-acid chain; its full sequence is NF-kappa-B inhibitor cactus (500 aa).

Positions 1-43 (MPSPTKAAEAATKATATSDCSCSAASVEQRAPSNAANPSSSLA) are enriched in low complexity. Disordered regions lie at residues 1–148 (MPSP…MRLK) and 171–212 (LNNL…APPS). Ser-45 carries the post-translational modification Phosphoserine; by PKC. A compositionally biased stretch (polar residues) spans 69–86 (NETSDSGFISGPQSSQIF). Acidic residues predominate over residues 118–130 (IIDEEEDQEEQEK). Ser-144 bears the Phosphoserine; by PKC mark. Residues 171-189 (LNNLGQSSSTQITGRSKVQ) show a composition bias toward polar residues. Thr-183 is subject to Phosphothreonine; by PKC. Low complexity predominate over residues 190–212 (SSTASTANANPSGSGATSSAPPS). ANK repeat units lie at residues 229–261 (DGDTPLHLACISGSVDVVAALIRMAPHPCLLNI), 265–294 (VAQTPLHLAALTAQPNIMRILLLAGAEPTV), 298–327 (HGNTALHLSCIAGEKQCVRALTEKFGATEI), 361–390 (DGERCVHLAAEAGHIDILRILVSHGADINA), and 395–424 (SGRTPLHIAIEGCNEDLANFLLDECEKLNL). A phosphothreonine; by PKC mark is found at Thr-293 and Thr-319. The residue at position 395 (Ser-395) is a Phosphoserine; by PKC.

Belongs to the NF-kappa-B inhibitor family. As to quaternary structure, phosphorylated isoform A binds to dorsal (dl); inhibits dl translocation to the nucleus and therefore from binding to DNA. In vitro, interacts with IKKbeta. Interacts with cactin and kappa-B-Ras. Post-translationally, activated IKKbeta phosphorylates cact. Expressed in ovary (at protein level).

It is found in the cytoplasm. Involved in the formation of the dorsoventral pattern. It inhibits nuclear translocation of the dorsal morphogen in the dorsal region of the embryo. Acts as a negative regulator of the NF-kappa-B (rel) signaling pathway. Cact is degraded by IKKbeta, this is essential for NF-kappa-B (rel) activation. This Drosophila melanogaster (Fruit fly) protein is NF-kappa-B inhibitor cactus (cact).